We begin with the raw amino-acid sequence, 105 residues long: UPF0060 membrane protein Reut_B3679 (105 aa).

A run of 4 helical transmembrane segments spans residues isoleucine 4–tryptophan 24, glycine 28–leucine 48, alanine 60–valine 80, and proline 82–phenylalanine 102.

The protein belongs to the UPF0060 family.

It localises to the cell inner membrane. This is UPF0060 membrane protein Reut_B3679 from Cupriavidus pinatubonensis (strain JMP 134 / LMG 1197) (Cupriavidus necator (strain JMP 134)).